We begin with the raw amino-acid sequence, 402 residues long: Zinc finger protein 587B (402 aa).

Residues 15-91 enclose the KRAB domain; it reads VTFEDVAVKF…PVTGVSPKKA (77 aa). A C2H2-type 1 zinc finger spans residues 92 to 114; sequence HPCEMCGPILGDILHVADHQGTH. Residues 120–142 form a C2H2-type 2; degenerate zinc finger; the sequence is HRCEAWGNKLYDSGNFHQHQNEH. Glycyl lysine isopeptide (Lys-Gly) (interchain with G-Cter in SUMO2) cross-links involve residues Lys177, Lys200, and Lys253. C2H2-type zinc fingers lie at residues 242 to 264, 270 to 292, 298 to 320, 326 to 348, and 354 to 383; these read YVCC…QRVH, YECG…QQFH, YGCE…QKVH, YECG…QRIH, and YKCG…WVDH. A Glycyl lysine isopeptide (Lys-Gly) (interchain with G-Cter in SUMO2) cross-link involves residue Lys366.

Belongs to the krueppel C2H2-type zinc-finger protein family.

It is found in the nucleus. In terms of biological role, may be involved in transcriptional regulation. This chain is Zinc finger protein 587B (ZNF587B), found in Homo sapiens (Human).